Here is a 352-residue protein sequence, read N- to C-terminus: UDP-N-acetylglucosamine--N-acetylmuramyl-(pentapeptide) pyrophosphoryl-undecaprenol N-acetylglucosamine transferase (352 aa).

UDP-N-acetyl-alpha-D-glucosamine is bound by residues 14–16 (TGG), Asn-124, Arg-164, Ser-185, and Gln-285.

The protein belongs to the glycosyltransferase 28 family. MurG subfamily.

It is found in the cell inner membrane. It carries out the reaction di-trans,octa-cis-undecaprenyl diphospho-N-acetyl-alpha-D-muramoyl-L-alanyl-D-glutamyl-meso-2,6-diaminopimeloyl-D-alanyl-D-alanine + UDP-N-acetyl-alpha-D-glucosamine = di-trans,octa-cis-undecaprenyl diphospho-[N-acetyl-alpha-D-glucosaminyl-(1-&gt;4)]-N-acetyl-alpha-D-muramoyl-L-alanyl-D-glutamyl-meso-2,6-diaminopimeloyl-D-alanyl-D-alanine + UDP + H(+). It functions in the pathway cell wall biogenesis; peptidoglycan biosynthesis. Functionally, cell wall formation. Catalyzes the transfer of a GlcNAc subunit on undecaprenyl-pyrophosphoryl-MurNAc-pentapeptide (lipid intermediate I) to form undecaprenyl-pyrophosphoryl-MurNAc-(pentapeptide)GlcNAc (lipid intermediate II). This is UDP-N-acetylglucosamine--N-acetylmuramyl-(pentapeptide) pyrophosphoryl-undecaprenol N-acetylglucosamine transferase from Chlamydia trachomatis serovar L2 (strain ATCC VR-902B / DSM 19102 / 434/Bu).